A 256-amino-acid polypeptide reads, in one-letter code: Geranylgeranylglyceryl phosphate synthase (256 aa).

Mg(2+) contacts are provided by D28 and S53. Residues 172–178 (YLEAGSG), 203–204 (GG), and 225–226 (GT) each bind sn-glycerol 1-phosphate.

The protein belongs to the GGGP/HepGP synthase family. Group II subfamily. The cofactor is Mg(2+).

The protein resides in the cytoplasm. The enzyme catalyses sn-glycerol 1-phosphate + (2E,6E,10E)-geranylgeranyl diphosphate = sn-3-O-(geranylgeranyl)glycerol 1-phosphate + diphosphate. It participates in membrane lipid metabolism; glycerophospholipid metabolism. Prenyltransferase that catalyzes the transfer of the geranylgeranyl moiety of geranylgeranyl diphosphate (GGPP) to the C3 hydroxyl of sn-glycerol-1-phosphate (G1P). This reaction is the first ether-bond-formation step in the biosynthesis of archaeal membrane lipids. The polypeptide is Geranylgeranylglyceryl phosphate synthase (Methanococcus maripaludis (strain C6 / ATCC BAA-1332)).